The chain runs to 955 residues: Kinesin-like protein KIN-14L (955 aa).

In terms of domain architecture, Calponin-homology (CH) spans 19–140 (AARRFQAVQW…CILGLKAYHE (122 aa)). Residues 363–685 (NIRVYCRVRP…LKFAQRVSTV (323 aa)) enclose the Kinesin motor domain. 445–452 (GQTGSGKT) contacts ATP. A coiled-coil region spans residues 692–719 (AHKETREVMHLKEQIENLKRALGTEEWN). A disordered region spans residues 878-942 (RKENIPADPR…GKPIENGKKD (65 aa)). The segment covering 894–916 (NNFSHIKSPDTSNAKTMRRQSLT) has biased composition (polar residues).

The protein belongs to the TRAFAC class myosin-kinesin ATPase superfamily. Kinesin family. KIN-14 subfamily.

This is Kinesin-like protein KIN-14L from Arabidopsis thaliana (Mouse-ear cress).